The sequence spans 638 residues: Threonine--tRNA ligase (638 aa).

Positions 1-62 constitute a TGS domain; the sequence is MYQLTLPDKS…EKNSNIEVLT (62 aa). The interval 246–537 is catalytic; sequence DHRKIGKEMD…LIEHYEGKFP (292 aa). Zn(2+)-binding residues include cysteine 337, histidine 388, and histidine 514.

The protein belongs to the class-II aminoacyl-tRNA synthetase family. In terms of assembly, homodimer. Zn(2+) serves as cofactor.

The protein resides in the cytoplasm. It catalyses the reaction tRNA(Thr) + L-threonine + ATP = L-threonyl-tRNA(Thr) + AMP + diphosphate + H(+). Catalyzes the attachment of threonine to tRNA(Thr) in a two-step reaction: L-threonine is first activated by ATP to form Thr-AMP and then transferred to the acceptor end of tRNA(Thr). Also edits incorrectly charged L-seryl-tRNA(Thr). The protein is Threonine--tRNA ligase of Leptospira interrogans serogroup Icterohaemorrhagiae serovar copenhageni (strain Fiocruz L1-130).